Consider the following 212-residue polypeptide: Imidazole glycerol phosphate synthase subunit HisH (212 aa).

The Glutamine amidotransferase type-1 domain maps to 3–208 (RIVIVDYGMG…GRMVCDLIST (206 aa)). Catalysis depends on Cys81, which acts as the Nucleophile. Active-site residues include His183 and Glu185.

In terms of assembly, heterodimer of HisH and HisF.

It is found in the cytoplasm. It carries out the reaction 5-[(5-phospho-1-deoxy-D-ribulos-1-ylimino)methylamino]-1-(5-phospho-beta-D-ribosyl)imidazole-4-carboxamide + L-glutamine = D-erythro-1-(imidazol-4-yl)glycerol 3-phosphate + 5-amino-1-(5-phospho-beta-D-ribosyl)imidazole-4-carboxamide + L-glutamate + H(+). The enzyme catalyses L-glutamine + H2O = L-glutamate + NH4(+). The protein operates within amino-acid biosynthesis; L-histidine biosynthesis; L-histidine from 5-phospho-alpha-D-ribose 1-diphosphate: step 5/9. IGPS catalyzes the conversion of PRFAR and glutamine to IGP, AICAR and glutamate. The HisH subunit catalyzes the hydrolysis of glutamine to glutamate and ammonia as part of the synthesis of IGP and AICAR. The resulting ammonia molecule is channeled to the active site of HisF. This Symbiobacterium thermophilum (strain DSM 24528 / JCM 14929 / IAM 14863 / T) protein is Imidazole glycerol phosphate synthase subunit HisH.